The following is a 404-amino-acid chain: Transcriptional repressor OPI1 (404 aa).

Ser-10 is subject to Phosphoserine. Positions 25–51 (QSCRQKSQPSEDVSQADKMPASESSTT) are disordered. A compositionally biased stretch (polar residues) spans 26 to 37 (SCRQKSQPSEDV). The segment at 109–138 (KRQKLSRAIAKGKDNLKEYKLNMSIESKKR) is basic motif. Residues 139–160 (LVTCLHLLKLANKQLSDKISCL) form a leucine-zipper region. 3 disordered regions span residues 170 to 201 (HPLH…DEEF), 305 to 327 (LQQQ…SSVT), and 378 to 404 (QQQQ…DSKD). The span at 186-201 (GEDETSSDEDDDDEEF) shows a compositional bias: acidic residues. An FFAT motif is present at residues 200-206 (EFFDASE). The span at 378–387 (QQQQYRQQQQ) shows a compositional bias: low complexity. Polar residues predominate over residues 394-404 (KPSQDNVDSKD).

As to quaternary structure, interacts with SCS2.

The protein localises to the endoplasmic reticulum. Its subcellular location is the nucleus. Negative regulator of the transcriptional complex INO2-INO4 in response to phospholipid precursor availability. When precursors become limiting, OPI1 is retained at the endoplasmic reticulum (ER) and INO2-INO4 activates INO1 and other genes required for phospholipid biosynthesis, whereas abundant precursor availability results in targeting of OPI1 to the nucleus to repress transcription of these genes. Binds directly to phosphatidic acid, which is required for ER targeting and may act as sensing mechanism for precursor availability, as phosphatidic acid becomes rapidly depleted upon phospholipid biosynthesis. This is Transcriptional repressor OPI1 (OPI1) from Saccharomyces cerevisiae (strain ATCC 204508 / S288c) (Baker's yeast).